Reading from the N-terminus, the 150-residue chain is MAGKMINKMMGFLGLEDDLEEDIEEVEEGKNTKNDFTDVESIMNSKRQNKVVSIHTTISAKVRIVKPTTYEEAADICDELKNRKIIVINTTGLETRIAQRLLDFMGGASYALGGDLEEIEKGVYILSPSSVEVSSDLKNELSAKKIFGWK.

Belongs to the SepF family. Homodimer. Interacts with FtsZ.

The protein localises to the cytoplasm. Its function is as follows. Cell division protein that is part of the divisome complex and is recruited early to the Z-ring. Probably stimulates Z-ring formation, perhaps through the cross-linking of FtsZ protofilaments. Its function overlaps with FtsA. The chain is Cell division protein SepF from Clostridium kluyveri (strain NBRC 12016).